A 103-amino-acid chain; its full sequence is Cell division suppressor protein YneA (103 aa).

Residues 36-87 form the LysM domain; that stretch reads VKIEVQEGDTLWELADRIKGGKTADKHKFIEWVADKNNLPTSVIKPGDVLIL.

The protein belongs to the YneA family.

The protein resides in the cytoplasm. Its function is as follows. Inhibits cell division during the SOS response. Affects a later stage of the cell division protein assembly, after the assembly of the Z ring, by probably suppressing recruitment of FtsL and/or DivIC to the division machinery. This Bacillus licheniformis (strain ATCC 14580 / DSM 13 / JCM 2505 / CCUG 7422 / NBRC 12200 / NCIMB 9375 / NCTC 10341 / NRRL NRS-1264 / Gibson 46) protein is Cell division suppressor protein YneA.